Consider the following 324-residue polypeptide: Cyclin-dependent kinase C-3 (324 aa).

The Protein kinase domain occupies 27–320 (FRRIRKIGEG…AHDALCAAYF (294 aa)). Residues 33–41 (IGEGTYGEV) and Lys-56 each bind ATP. The residue at position 37 (Thr-37) is a Phosphothreonine. A Phosphotyrosine modification is found at Tyr-38. Catalysis depends on Asp-160, which acts as the Proton acceptor. The residue at position 193 (Thr-193) is a Phosphothreonine.

It belongs to the protein kinase superfamily. CMGC Ser/Thr protein kinase family. CDC2/CDKX subfamily.

The catalysed reaction is L-seryl-[protein] + ATP = O-phospho-L-seryl-[protein] + ADP + H(+). It carries out the reaction L-threonyl-[protein] + ATP = O-phospho-L-threonyl-[protein] + ADP + H(+). It catalyses the reaction [DNA-directed RNA polymerase] + ATP = phospho-[DNA-directed RNA polymerase] + ADP + H(+). In Oryza sativa subsp. japonica (Rice), this protein is Cyclin-dependent kinase C-3 (CDKC-1).